A 229-amino-acid polypeptide reads, in one-letter code: MATWSNLGLQDSASPLMEQLNFFHDHTLLILIMITILVGYLMLMLFFNKFTNRFLLHGQTIEIIWTILPAIVLMFIALPSLRILYLLDEINSPAITLKTIGHQWYWSYEYSDFMNLEFDSYMVPTNELETNGFRLLDVDNRIVLPMNTQIRILVTAADVIHSWTVPALGVKVDGTPGRLNQTNFLMNRPGLFFGQCSEICGANHSFMPIVLESSPTNYFIKWITAMNSN.

The Mitochondrial intermembrane portion of the chain corresponds to 1-26 (MATWSNLGLQDSASPLMEQLNFFHDH). Residues 27–48 (TLLILIMITILVGYLMLMLFFN) form a helical membrane-spanning segment. Topologically, residues 49-62 (KFTNRFLLHGQTIE) are mitochondrial matrix. A helical transmembrane segment spans residues 63–82 (IIWTILPAIVLMFIALPSLR). Over 83 to 229 (ILYLLDEINS…IKWITAMNSN (147 aa)) the chain is Mitochondrial intermembrane. Residues His-161, Cys-196, Glu-198, Cys-200, His-204, and Met-207 each contribute to the Cu cation site. Glu-198 lines the Mg(2+) pocket.

It belongs to the cytochrome c oxidase subunit 2 family. Component of the cytochrome c oxidase (complex IV, CIV), a multisubunit enzyme composed of a catalytic core of 3 subunits and several supernumerary subunits. The complex exists as a monomer or a dimer and forms supercomplexes (SCs) in the inner mitochondrial membrane with ubiquinol-cytochrome c oxidoreductase (cytochrome b-c1 complex, complex III, CIII). Cu cation serves as cofactor.

It localises to the mitochondrion inner membrane. It carries out the reaction 4 Fe(II)-[cytochrome c] + O2 + 8 H(+)(in) = 4 Fe(III)-[cytochrome c] + 2 H2O + 4 H(+)(out). Its function is as follows. Component of the cytochrome c oxidase, the last enzyme in the mitochondrial electron transport chain which drives oxidative phosphorylation. The respiratory chain contains 3 multisubunit complexes succinate dehydrogenase (complex II, CII), ubiquinol-cytochrome c oxidoreductase (cytochrome b-c1 complex, complex III, CIII) and cytochrome c oxidase (complex IV, CIV), that cooperate to transfer electrons derived from NADH and succinate to molecular oxygen, creating an electrochemical gradient over the inner membrane that drives transmembrane transport and the ATP synthase. Cytochrome c oxidase is the component of the respiratory chain that catalyzes the reduction of oxygen to water. Electrons originating from reduced cytochrome c in the intermembrane space (IMS) are transferred via the dinuclear copper A center (CU(A)) of subunit 2 and heme A of subunit 1 to the active site in subunit 1, a binuclear center (BNC) formed by heme A3 and copper B (CU(B)). The BNC reduces molecular oxygen to 2 water molecules using 4 electrons from cytochrome c in the IMS and 4 protons from the mitochondrial matrix. The polypeptide is Cytochrome c oxidase subunit 2 (COII) (Simulium vittatum (Striped black fly)).